We begin with the raw amino-acid sequence, 191 residues long: Potassium-transporting ATPase KdpC subunit (191 aa).

A helical transmembrane segment spans residues 7-27 (ASLVLFLSLTLLTGVAYPLLV).

Belongs to the KdpC family. The system is composed of three essential subunits: KdpA, KdpB and KdpC.

Its subcellular location is the cell inner membrane. Part of the high-affinity ATP-driven potassium transport (or Kdp) system, which catalyzes the hydrolysis of ATP coupled with the electrogenic transport of potassium into the cytoplasm. This subunit acts as a catalytic chaperone that increases the ATP-binding affinity of the ATP-hydrolyzing subunit KdpB by the formation of a transient KdpB/KdpC/ATP ternary complex. The protein is Potassium-transporting ATPase KdpC subunit of Methylibium petroleiphilum (strain ATCC BAA-1232 / LMG 22953 / PM1).